A 488-amino-acid chain; its full sequence is Cruciferin (488 aa).

The signal sequence occupies residues 1–23 (MARLSSLLSFSLALLTFLHGSTA). 2 disulfide bridges follow: Cys-30–Cys-63 and Cys-105–Cys-305. Cupin type-1 domains follow at residues 35-262 (LNAL…RTAQ) and 311-460 (DNLD…EEAR). Residues 116–163 (QPSGGSPFGEGQGQGQQGQGQGHQGQGQGQQGQQGQQGQQSQGQGFRD) form a disordered region. The segment covering 121–147 (SPFGEGQGQGQQGQGQGHQGQGQGQQG) has biased composition (gly residues). Low complexity predominate over residues 148–160 (QQGQQGQQSQGQG).

It belongs to the 11S seed storage protein (globulins) family. Hexamer; each subunit is composed of an acidic and a basic chain derived from a single precursor and linked by a disulfide bond.

Its subcellular location is the rough endoplasmic reticulum. In terms of biological role, this is a seed storage protein. This Brassica napus (Rape) protein is Cruciferin (CRUA).